Reading from the N-terminus, the 370-residue chain is Small ribosomal subunit biogenesis GTPase RsgA 1 (370 aa).

Positions 97-255 (QTQLDRPPIA…LADTPGFNQP (159 aa)) constitute a CP-type G domain. GTP is bound by residues 146–149 (NKSD) and 197–205 (GPSGVGKSS). Residues cysteine 280, cysteine 285, histidine 287, and cysteine 293 each coordinate Zn(2+). Residues 325-370 (PESTLKLKTKGKGQSQYEPKLESKKYRRTSRRTQVQGLQDLYQEEE) form a disordered region.

The protein belongs to the TRAFAC class YlqF/YawG GTPase family. RsgA subfamily. In terms of assembly, monomer. Associates with 30S ribosomal subunit, binds 16S rRNA. Zn(2+) is required as a cofactor.

The protein localises to the cytoplasm. Functionally, one of several proteins that assist in the late maturation steps of the functional core of the 30S ribosomal subunit. Helps release RbfA from mature subunits. May play a role in the assembly of ribosomal proteins into the subunit. Circularly permuted GTPase that catalyzes slow GTP hydrolysis, GTPase activity is stimulated by the 30S ribosomal subunit. This chain is Small ribosomal subunit biogenesis GTPase RsgA 1, found in Nostoc sp. (strain PCC 7120 / SAG 25.82 / UTEX 2576).